The following is a 222-amino-acid chain: MNAPITQKNTAYISSDKLSLLELENSNKFINLLMVDGKKSRAIRLFYDTLVLLKRKNLKENSKKESLLGIIGQLSPKNSIEDLVNNSNKLSNNSNEEIKIPLIDNSKSDDKSNLLETISVLEVLSIALKNVTPSVELRKVRRAGNTFLIPAILSQHKANTLAIRWVIESAKKKQQNSKQNFAECLADEIYQAYLKQGKARQKRDELHSAAISNRANIRYRWW.

Belongs to the universal ribosomal protein uS7 family. As to quaternary structure, part of the small ribosomal subunit.

It localises to the mitochondrion. Functionally, one of the primary rRNA binding proteins, it binds directly to 18S rRNA where it nucleates assembly of the head domain of the small subunit. This Prototheca wickerhamii protein is Small ribosomal subunit protein uS7m (RPS7).